Here is a 541-residue protein sequence, read N- to C-terminus: Membrane protein insertase YidC (541 aa).

Transmembrane regions (helical) follow at residues 7–27 (FLIV…GVTH), 289–309 (YLLT…VTLP), 356–376 (IIHS…LAFY), 430–450 (LPIL…LEMV), 463–483 (LSAQ…MFAQ), and 498–518 (IMMA…SGLV).

This sequence belongs to the OXA1/ALB3/YidC family. Type 1 subfamily. In terms of assembly, interacts with the Sec translocase complex via SecD. Specifically interacts with transmembrane segments of nascent integral membrane proteins during membrane integration.

It is found in the cell inner membrane. Functionally, required for the insertion and/or proper folding and/or complex formation of integral membrane proteins into the membrane. Involved in integration of membrane proteins that insert both dependently and independently of the Sec translocase complex, as well as at least some lipoproteins. Aids folding of multispanning membrane proteins. This is Membrane protein insertase YidC from Ruthia magnifica subsp. Calyptogena magnifica.